An 88-amino-acid chain; its full sequence is MASSKQADPQTDARPLPQDFETALAELESLVSAMENGTLPLEQSLSAYRRGVELARVCQDRLAQAEQQVKVLEGDLLRPLDPAALDDE.

It belongs to the XseB family. Heterooligomer composed of large and small subunits.

It localises to the cytoplasm. It catalyses the reaction Exonucleolytic cleavage in either 5'- to 3'- or 3'- to 5'-direction to yield nucleoside 5'-phosphates.. Bidirectionally degrades single-stranded DNA into large acid-insoluble oligonucleotides, which are then degraded further into small acid-soluble oligonucleotides. This chain is Exodeoxyribonuclease 7 small subunit, found in Bordetella bronchiseptica (strain ATCC BAA-588 / NCTC 13252 / RB50) (Alcaligenes bronchisepticus).